The following is a 169-amino-acid chain: Putative tRNA (cytidine(34)-2'-O)-methyltransferase (169 aa).

S-adenosyl-L-methionine contacts are provided by Ile-79, Gly-104, Ile-125, and Ser-133.

It belongs to the class IV-like SAM-binding methyltransferase superfamily. RNA methyltransferase TrmH family. TrmL subfamily.

The protein resides in the cytoplasm. It carries out the reaction cytidine(34) in tRNA + S-adenosyl-L-methionine = 2'-O-methylcytidine(34) in tRNA + S-adenosyl-L-homocysteine + H(+). It catalyses the reaction 5-carboxymethylaminomethyluridine(34) in tRNA(Leu) + S-adenosyl-L-methionine = 5-carboxymethylaminomethyl-2'-O-methyluridine(34) in tRNA(Leu) + S-adenosyl-L-homocysteine + H(+). Its function is as follows. Could methylate the ribose at the nucleotide 34 wobble position in tRNA. The sequence is that of Putative tRNA (cytidine(34)-2'-O)-methyltransferase from Listeria monocytogenes serotype 4b (strain F2365).